We begin with the raw amino-acid sequence, 354 residues long: Holliday junction branch migration complex subunit RuvB (354 aa).

Residues 5 to 197 (TDDFSAADLP…FGIVARLEFY (193 aa)) form a large ATPase domain (RuvB-L) region. Residues Leu-36, Arg-37, Gly-78, Lys-81, Thr-82, Thr-83, 144–146 (EDY), Arg-187, Tyr-197, and Arg-234 each bind ATP. Residue Thr-82 coordinates Mg(2+). The interval 198 to 268 (TAEELGRIVR…IANKALAMLD (71 aa)) is small ATPAse domain (RuvB-S). The interval 271 to 354 (PQGFDVMDRK…PPVSGNDMFT (84 aa)) is head domain (RuvB-H). Arg-307, Arg-326, and Arg-331 together coordinate DNA.

This sequence belongs to the RuvB family. As to quaternary structure, homohexamer. Forms an RuvA(8)-RuvB(12)-Holliday junction (HJ) complex. HJ DNA is sandwiched between 2 RuvA tetramers; dsDNA enters through RuvA and exits via RuvB. An RuvB hexamer assembles on each DNA strand where it exits the tetramer. Each RuvB hexamer is contacted by two RuvA subunits (via domain III) on 2 adjacent RuvB subunits; this complex drives branch migration. In the full resolvosome a probable DNA-RuvA(4)-RuvB(12)-RuvC(2) complex forms which resolves the HJ.

It localises to the cytoplasm. It catalyses the reaction ATP + H2O = ADP + phosphate + H(+). In terms of biological role, the RuvA-RuvB-RuvC complex processes Holliday junction (HJ) DNA during genetic recombination and DNA repair, while the RuvA-RuvB complex plays an important role in the rescue of blocked DNA replication forks via replication fork reversal (RFR). RuvA specifically binds to HJ cruciform DNA, conferring on it an open structure. The RuvB hexamer acts as an ATP-dependent pump, pulling dsDNA into and through the RuvAB complex. RuvB forms 2 homohexamers on either side of HJ DNA bound by 1 or 2 RuvA tetramers; 4 subunits per hexamer contact DNA at a time. Coordinated motions by a converter formed by DNA-disengaged RuvB subunits stimulates ATP hydrolysis and nucleotide exchange. Immobilization of the converter enables RuvB to convert the ATP-contained energy into a lever motion, pulling 2 nucleotides of DNA out of the RuvA tetramer per ATP hydrolyzed, thus driving DNA branch migration. The RuvB motors rotate together with the DNA substrate, which together with the progressing nucleotide cycle form the mechanistic basis for DNA recombination by continuous HJ branch migration. Branch migration allows RuvC to scan DNA until it finds its consensus sequence, where it cleaves and resolves cruciform DNA. This chain is Holliday junction branch migration complex subunit RuvB, found in Polaromonas sp. (strain JS666 / ATCC BAA-500).